Consider the following 153-residue polypeptide: Catabolic 3-dehydroquinase (153 aa).

The Proton acceptor role is filled by Tyr-24. Residues Asn-75, His-81, and Asp-88 each contribute to the substrate site. Catalysis depends on His-101, which acts as the Proton donor. Substrate is bound by residues 102 to 103 (VS) and Arg-112.

Belongs to the type-II 3-dehydroquinase family. Homododecamer. Adopts a ring-like structure, composed of an arrangement of two hexameric rings stacked on top of one another.

It catalyses the reaction 3-dehydroquinate = 3-dehydroshikimate + H2O. It functions in the pathway aromatic compound metabolism; 3,4-dihydroxybenzoate biosynthesis; 3,4-dihydroxybenzoate from 3-dehydroquinate: step 1/2. Is involved in the catabolism of quinate. Allows the utilization of quinate as carbon source via the beta-ketoadipate pathway. The chain is Catabolic 3-dehydroquinase from Aspergillus oryzae (strain ATCC 42149 / RIB 40) (Yellow koji mold).